The chain runs to 1404 residues: MKALLDLFKQVTQKEEFDSIKIGLASPEKIRSWSYGEVKKPETINYRTFKPERDGLFCAKIFGPVKDYECLCGKYKRLKHRGVICEKCGVEVTLSRIRRERMGHIELASPVAHIWFLKSLPSRLGLVLDITLRDIERVLYFEAYIVTDPGMTPLTRGQLLTEDDYLNKTEEFGDDFSAAMGAEGIRALLNSMDILSEIESLRLEIQTTGSETKIKKAAKRLKVLEAFNKSGMKPEWMILTVLPVLPPELRPLVPLDGGRFATSDLNDLYRRVINRNNRLKRLLELRAPEIIIRNEKRMLQESVDSLLDNGRRGKAMTGANKRPLKSLADMIKGKGGRFRQNLLGKRVDYSGRSVIVVGPQLKLHQCGLPKKMALELFKPFIFNKLEVMGVASTIKAAKREVENENPIVWDILEEVIREHPVMLNRAPTLHRLGIQAFEPVLIEGKAIQLHPLVCAAFNADFDGDQMAVHVPLSLEAQMECRTLMLSTNNVLSPANGDPIIVPSQDIVLGLYYMTREKVGAQGEGMVFSDVSEITRAYESKALELNARITVRIKEKKKSCGHGEDPIETITRFETTVGRALISEILPAGLPFALVNKTLKKKEISKLINASFRLCGLRETVIFADKLMYSGFSYATRGGISICLDDLVTPSQKTGIIQAAEQEIHEIANQYISGLVTQGERYNKVVDIWARAGDQVAKAMMDQLSVEPVKDQETGEIRTDKNGQAVTQESFNSIYMMADSGARGSAAQIRQLSGMRGLMAKPDGSIIETPITANFREGLNILQYFISTHGARKGLADTALKTANSGYLTRRLVDVTQDLVIIENDCGTDGGVVMKALVEGGNVVESLRGRILGRVAATDVINPETGEVICSEGTLLDEDTADEIEACSVDEVKVRTPLTCETRYGLCAKCYGRDLGRGTPVNVGEAVGVIAAQSIGEPGTQLTMRTFHIGGAASRAVVANQAESKSNGVVRYSHHIRYVKNAQNELIIISRSGEILIQDENGRERERHKIPYGATLHVQDGETIKAGQILGSWEPHKRPIITEYAGKIRFENVEEGVTVVRQIDEITGMATLVVIDPKRRNIAQSKGLRPLVKFLDENDQEINIPGTDQPVSITFHVGSIITVRDGQQVGIGEVLARIPQETSKTRDITGGLPRVAELFEARVPKDAGFLAEATGTVAFGKDTKGKQRLVITDLDGIAHEYLIPKDKHVTAHDGQVVNKGEVIVDGPIDPHDILRLQGVEALAKYISDEVQDVYRLQGVSINDKHIEVIVRQMLRRVQITNAGDSAFILGEQVERAEVLAENEKLITENKMPATYEYVLLGITKASLSTDSFISAASFQETTRVLTEASIMGKKDDLRGLKENVIVGRLIPAGTGLSFHNIRKKQRLSESTVYLDADLTENEIAE.

Positions 70, 72, 85, and 88 each coordinate Zn(2+). Mg(2+) is bound by residues Asp460, Asp462, and Asp464. Positions 825, 899, 906, and 909 each coordinate Zn(2+).

Belongs to the RNA polymerase beta' chain family. As to quaternary structure, the RNAP catalytic core consists of 2 alpha, 1 beta, 1 beta' and 1 omega subunit. When a sigma factor is associated with the core the holoenzyme is formed, which can initiate transcription. Mg(2+) is required as a cofactor. Zn(2+) serves as cofactor.

It carries out the reaction RNA(n) + a ribonucleoside 5'-triphosphate = RNA(n+1) + diphosphate. DNA-dependent RNA polymerase catalyzes the transcription of DNA into RNA using the four ribonucleoside triphosphates as substrates. This chain is DNA-directed RNA polymerase subunit beta', found in Nitrosomonas eutropha (strain DSM 101675 / C91 / Nm57).